A 461-amino-acid chain; its full sequence is V-type ATP synthase beta chain (461 aa).

The protein belongs to the ATPase alpha/beta chains family.

Its function is as follows. Produces ATP from ADP in the presence of a proton gradient across the membrane. The V-type beta chain is a regulatory subunit. This is V-type ATP synthase beta chain from Clostridium botulinum (strain ATCC 19397 / Type A).